We begin with the raw amino-acid sequence, 248 residues long: DNA polymerase sliding clamp 2 (248 aa).

The protein belongs to the PCNA family. As to quaternary structure, the subunits circularize to form a toroid; DNA passes through its center. Replication factor C (RFC) is required to load the toroid on the DNA. Forms a dimeric complex with PCNA3 and trimeric complexes PCNA123 and PCNA323; does not form homotrimers. Crystal structures show a heterotetramer of 2 PCNA2 and 2 PCNA3, which would be large enough to clamp a Holliday junction.

Its function is as follows. Sliding clamp subunit that acts as a moving platform for DNA processing. Responsible for tethering the catalytic subunit of DNA polymerase and other proteins to DNA during high-speed replication. Both trimeric complexes inhibit DNA ligase and both 3'-5' and 5'-3' activity of Hel308 (Hjm) helicase, but stimulate Hjc, the Holliday junction cleavage enzyme. In Sulfurisphaera tokodaii (strain DSM 16993 / JCM 10545 / NBRC 100140 / 7) (Sulfolobus tokodaii), this protein is DNA polymerase sliding clamp 2.